Here is an 85-residue protein sequence, read N- to C-terminus: Large ribosomal subunit protein bL27 (85 aa).

Positions 1–20 (MAHKKAGGSTRNGRDSEAKR) are disordered.

It belongs to the bacterial ribosomal protein bL27 family.

This Salmonella agona (strain SL483) protein is Large ribosomal subunit protein bL27.